The chain runs to 131 residues: Large ribosomal subunit protein bL17 (131 aa).

The protein belongs to the bacterial ribosomal protein bL17 family. Part of the 50S ribosomal subunit. Contacts protein L32.

The polypeptide is Large ribosomal subunit protein bL17 (Polynucleobacter necessarius subsp. necessarius (strain STIR1)).